We begin with the raw amino-acid sequence, 308 residues long: Aspartate carbamoyltransferase catalytic subunit (308 aa).

Residues Arg59 and Thr60 each contribute to the carbamoyl phosphate site. Lys87 contacts L-aspartate. Carbamoyl phosphate-binding residues include Arg109, His137, and Gln140. L-aspartate is bound by residues Arg173 and Arg224. Carbamoyl phosphate contacts are provided by Gly267 and Pro268.

The protein belongs to the aspartate/ornithine carbamoyltransferase superfamily. ATCase family. Heterododecamer (2C3:3R2) of six catalytic PyrB chains organized as two trimers (C3), and six regulatory PyrI chains organized as three dimers (R2).

It catalyses the reaction carbamoyl phosphate + L-aspartate = N-carbamoyl-L-aspartate + phosphate + H(+). The protein operates within pyrimidine metabolism; UMP biosynthesis via de novo pathway; (S)-dihydroorotate from bicarbonate: step 2/3. Its function is as follows. Catalyzes the condensation of carbamoyl phosphate and aspartate to form carbamoyl aspartate and inorganic phosphate, the committed step in the de novo pyrimidine nucleotide biosynthesis pathway. This Helicobacter acinonychis (strain Sheeba) protein is Aspartate carbamoyltransferase catalytic subunit.